Reading from the N-terminus, the 178-residue chain is Prion-like protein doppel (178 aa).

Residues 1 to 25 (MRKHLGGCWLAIVCILLFSQLCSVK) form the signal peptide. The interval 27-50 (RGIKHRIKWNRKVLPSTSQVTEAR) is flexible tail. Residues 51 to 154 (TAEIRPGAFI…KHCDFWLERG (104 aa)) form a globular region. Disulfide bonds link Cys-94–Cys-147 and Cys-108–Cys-142. Asn-98 and Asn-110 each carry an N-linked (GlcNAc...) asparagine glycan. The tract at residues 124-141 (KQDNKLYQRVLWQLIREL) is cu(2+) binding. Residue Gly-154 is the site of GPI-anchor amidated glycine attachment. Residues 155 to 178 (AGLRVTLDQPMMLCLLVFIWFIVK) constitute a propeptide, removed in mature form.

This sequence belongs to the prion family. Post-translationally, N-glycosylated. O-glycosylated. Strongly expressed in testis. Detected at low levels in ovary, spleen, kidney and mammary gland.

It is found in the cell membrane. Required for normal acrosome reaction and for normal male fertility. Can bind Cu(2+). The chain is Prion-like protein doppel (PRND) from Bos taurus (Bovine).